Here is a 49-residue protein sequence, read N- to C-terminus: MAEHIILECTECGDRSYLSEKNKRKHPERLALKKYCPVERKVTLHRETK.

The protein belongs to the bacterial ribosomal protein bL33 family.

The chain is Large ribosomal subunit protein bL33B from Lactobacillus gasseri (strain ATCC 33323 / DSM 20243 / BCRC 14619 / CIP 102991 / JCM 1131 / KCTC 3163 / NCIMB 11718 / NCTC 13722 / AM63).